Reading from the N-terminus, the 339-residue chain is Glycerol-3-phosphate dehydrogenase [NAD(P)+] (339 aa).

Positions 14, 15, 35, and 109 each coordinate NADPH. The sn-glycerol 3-phosphate site is built by Lys109, Gly138, and Thr140. NADPH is bound at residue Ala142. Sn-glycerol 3-phosphate is bound by residues Lys194, Asp247, Ser257, Arg258, and Asn259. The active-site Proton acceptor is the Lys194. NADPH is bound at residue Arg258. The NADPH site is built by Val282 and Glu284.

The protein belongs to the NAD-dependent glycerol-3-phosphate dehydrogenase family.

It localises to the cytoplasm. The enzyme catalyses sn-glycerol 3-phosphate + NAD(+) = dihydroxyacetone phosphate + NADH + H(+). The catalysed reaction is sn-glycerol 3-phosphate + NADP(+) = dihydroxyacetone phosphate + NADPH + H(+). The protein operates within membrane lipid metabolism; glycerophospholipid metabolism. Catalyzes the reduction of the glycolytic intermediate dihydroxyacetone phosphate (DHAP) to sn-glycerol 3-phosphate (G3P), the key precursor for phospholipid synthesis. This chain is Glycerol-3-phosphate dehydrogenase [NAD(P)+], found in Shewanella pealeana (strain ATCC 700345 / ANG-SQ1).